Here is a 376-residue protein sequence, read N- to C-terminus: MDPVPLFNPCEMGRFTFSHRIVLAPLTRARSYGNLPQSHAILYYSQRATKGGLLISEATGVSSDAPCTNTPGIWTKEQVEAWKPVVDAVHAKGGIFFCQIWHVGRASDLEQEPISSTDKPVEKNEDMDFPVPRRLAVEEIPDVINHFRIAARNAIDAGFDGVEVHGAHGFLLEQFMKDGVNDRADEYGGSLQNRCRFALEVIDAVSTEVGPDRVGFRISPYISYYGCHDSDPDALGVYMARELDRRGVLYCSAVEPEMVAATTVVDGETTTTTMSRRMMIPHRLHGMREAFRRGMFMVGGGYDRDAGNMAVASGYADMVVFGRLFLANPDLPRRFQLDAPLNKYDRATFYTHDPVVGYTDYPFLDDDREAMSDHTG.

FMN contacts are provided by residues 25-27, Ala-58, and Gln-99; that span reads PLT. 165–168 provides a ligand contact to substrate; it reads HGAH. Residues Arg-217, Gly-301, and 322-323 contribute to the FMN site; that span reads GR.

This sequence belongs to the NADH:flavin oxidoreductase/NADH oxidase family. FMN serves as cofactor.

Its function is as follows. Putative oxophytodienoate reductase that may be involved in the biosynthesis or metabolism of oxylipin signaling molecules. The polypeptide is Putative 12-oxophytodienoate reductase 13 (OPR13) (Oryza sativa subsp. japonica (Rice)).